A 363-amino-acid polypeptide reads, in one-letter code: Protein-glutamate methylesterase/protein-glutamine glutaminase 1 (363 aa).

One can recognise a Response regulatory domain in the interval K7–E124. At D58 the chain carries 4-aspartylphosphate. One can recognise a CheB-type methylesterase domain in the interval F164–Q356. Catalysis depends on residues S176, H202, and D298.

Belongs to the CheB family. Post-translationally, phosphorylated by CheA. Phosphorylation of the N-terminal regulatory domain activates the methylesterase activity.

The protein localises to the cytoplasm. The enzyme catalyses [protein]-L-glutamate 5-O-methyl ester + H2O = L-glutamyl-[protein] + methanol + H(+). It catalyses the reaction L-glutaminyl-[protein] + H2O = L-glutamyl-[protein] + NH4(+). Involved in chemotaxis. Part of a chemotaxis signal transduction system that modulates chemotaxis in response to various stimuli. Catalyzes the demethylation of specific methylglutamate residues introduced into the chemoreceptors (methyl-accepting chemotaxis proteins or MCP) by CheR. Also mediates the irreversible deamidation of specific glutamine residues to glutamic acid. The polypeptide is Protein-glutamate methylesterase/protein-glutamine glutaminase 1 (Geobacter metallireducens (strain ATCC 53774 / DSM 7210 / GS-15)).